We begin with the raw amino-acid sequence, 465 residues long: Casein kinase 1-like protein 2 (465 aa).

The 269-residue stretch at 9–277 (FRLGRKIGGG…LKRLFRDLFI (269 aa)) folds into the Protein kinase domain. ATP-binding positions include 15–23 (IGGGSFGEI) and lysine 38. The active-site Proton acceptor is the aspartate 128. Disordered regions lie at residues 300–344 (STPP…GIPR) and 396–428 (REAAVLGTDSEPSNPQIVEAGSGSNSKIPVSRN). Residues 405–428 (SEPSNPQIVEAGSGSNSKIPVSRN) show a composition bias toward polar residues.

Belongs to the protein kinase superfamily. CK1 Ser/Thr protein kinase family. Casein kinase I subfamily. In terms of assembly, monomer. Autophosphorylated.

Its subcellular location is the cytoplasm. The protein localises to the nucleus. The enzyme catalyses L-seryl-[protein] + ATP = O-phospho-L-seryl-[protein] + ADP + H(+). The catalysed reaction is L-threonyl-[protein] + ATP = O-phospho-L-threonyl-[protein] + ADP + H(+). Functionally, casein kinases are operationally defined by their preferential utilization of acidic proteins such as caseins as substrates. It can phosphorylate a large number of proteins. In Arabidopsis thaliana (Mouse-ear cress), this protein is Casein kinase 1-like protein 2.